Consider the following 296-residue polypeptide: Arginase (296 aa).

Mn(2+)-binding residues include His97, Asp120, His122, and Asp124. Substrate is bound by residues 122-126, 133-135, and Asp176; these read HGDLN and SGN. Asp223 and Asp225 together coordinate Mn(2+). Positions 237 and 268 each coordinate substrate.

It belongs to the arginase family. It depends on Mn(2+) as a cofactor.

The catalysed reaction is L-arginine + H2O = urea + L-ornithine. Its pathway is nitrogen metabolism; urea cycle; L-ornithine and urea from L-arginine: step 1/1. Functionally, involved in the catabolism of arginine. The polypeptide is Arginase (Bacillus subtilis (strain 168)).